The following is a 364-amino-acid chain: Isoflavone 4'-O-methyltransferase (364 aa).

S-adenosyl-L-methionine contacts are provided by residues 206-209 (VGGG), Asp230, 230-231 (DQ), 250-251 (DM), and Lys264. Catalysis depends on His268, which acts as the Proton acceptor.

It belongs to the class I-like SAM-binding methyltransferase superfamily. Cation-independent O-methyltransferase family. COMT subfamily. In terms of assembly, homodimer.

It carries out the reaction a 4'-hydroxyisoflavone + S-adenosyl-L-methionine = a 4'-methoxyisoflavone + S-adenosyl-L-homocysteine + H(+). The catalysed reaction is (2R,3S)-2,4',7-trihydroxyisoflavanone + S-adenosyl-L-methionine = (2R,3S)-2,7-dihydroxy-4'-methoxyisoflavanone + S-adenosyl-L-homocysteine + H(+). Its function is as follows. 2-hydroxyisoflavanone 4'-O-methyltransferase involved in the biosynthesis of the phytoalexin medicarpin. Has also an in vitro (+)-6a-hydroxymaackiain-3-0-methyltransferase activity, converting the pterocarpan 6a-hydroxymaackiain into pisatin. No activity with di- or trihydroxylated isoflavones, including daidzein and genistein, or with (-)-medicarpin and maackiain. The dual activity for either 3- or 4'-O-methylation depends upon substrate availability. This chain is Isoflavone 4'-O-methyltransferase (HI4'OMT), found in Medicago truncatula (Barrel medic).